The chain runs to 349 residues: MNSTWDGNQSSHPFCLLALGYLETVRFCLLEVLIIVFLTVLIISGNIIVIFVFHCAPLLNHHSTSYFIQTMAYADLLVGVSCLVPSLSLLYYPLPIEEAMTCQVFGFVVSVLKSISMASLACISIDRYIAITKPLTYNTLVTPWRLRLCIFLIWLYSTLVFLPSFFHWGKPGYHGDVFQWCAESWHTNSYFTLFIVMMLYAPAALIVCFTYFNIFRICQQHTKEISERQARFSSQNGETGEPQTCPDKRYAMVLFRITSVFYVLWLPYIIYFLLESSTGCSSRLASFLTTWLAISNSFCNCIIYSLSNSVFQRGLKGLSGSLCTSCASHTTAKDPYTVRCKGPPNGSHI.

At Met-1–Val-32 the chain is on the extracellular side. N-linked (GlcNAc...) asparagine glycosylation is found at Asn-2 and Asn-8. Residues Leu-33–Phe-53 form a helical membrane-spanning segment. The Cytoplasmic portion of the chain corresponds to His-54–Asp-75. The chain crosses the membrane as a helical span at residues Leu-76 to Ile-96. Over Glu-97–Val-104 the chain is Extracellular. Residues Phe-105–Ile-125 form a helical membrane-spanning segment. Residues Asp-126–Arg-147 lie on the Cytoplasmic side of the membrane. Residues Leu-148–Trp-168 form a helical membrane-spanning segment. Topologically, residues Gly-169–Phe-191 are extracellular. Residues Thr-192–Phe-212 traverse the membrane as a helical segment. At Asn-213–Met-252 the chain is on the cytoplasmic side. A helical transmembrane segment spans residues Val-253 to Leu-273. The Extracellular portion of the chain corresponds to Leu-274–Arg-283. A helical transmembrane segment spans residues Leu-284–Tyr-304. Residues Ser-305–Ile-349 are Cytoplasmic-facing.

This sequence belongs to the G-protein coupled receptor 1 family.

The protein resides in the cell membrane. Its function is as follows. Orphan receptor. In Mus musculus (Mouse), this protein is Probable G-protein coupled receptor 21 (Gpr21).